Consider the following 103-residue polypeptide: Small ribosomal subunit protein uS10 (103 aa).

It belongs to the universal ribosomal protein uS10 family. In terms of assembly, part of the 30S ribosomal subunit.

Involved in the binding of tRNA to the ribosomes. This Shewanella loihica (strain ATCC BAA-1088 / PV-4) protein is Small ribosomal subunit protein uS10.